Here is a 381-residue protein sequence, read N- to C-terminus: Outer membrane protein assembly factor BamB (381 aa).

The N-terminal stretch at 1 to 22 is a signal peptide; it reads MNLLKRYAAPVACAAAVLVFAA. Cys23 carries the N-palmitoyl cysteine lipid modification. Cys23 is lipidated: S-diacylglycerol cysteine.

The protein belongs to the BamB family. Part of the Bam complex.

It is found in the cell outer membrane. Part of the outer membrane protein assembly complex, which is involved in assembly and insertion of beta-barrel proteins into the outer membrane. This is Outer membrane protein assembly factor BamB from Burkholderia pseudomallei (strain K96243).